A 296-amino-acid chain; its full sequence is Sulfotransferase 1C2 (296 aa).

49–54 (KAGTTW) lines the 3'-phosphoadenylyl sulfate pocket. 107–109 (KTH) lines the substrate pocket. The active-site Proton acceptor is His109. Residues Arg131, Ser139, Tyr194, and 228–233 (TSFEKM) contribute to the 3'-phosphoadenylyl sulfate site. Ser139 bears the Phosphoserine mark. Ser254 carries the post-translational modification Phosphoserine. 256–260 (FMRKG) lines the 3'-phosphoadenylyl sulfate pocket.

The protein belongs to the sulfotransferase 1 family. Found in adult stomach, kidney and thyroid gland, and in fetal kidney and liver.

It is found in the cytoplasm. It localises to the lysosome. The protein resides in the mitochondrion. The enzyme catalyses a phenol + 3'-phosphoadenylyl sulfate = an aryl sulfate + adenosine 3',5'-bisphosphate + H(+). It carries out the reaction cholesterol + 3'-phosphoadenylyl sulfate = cholesterol sulfate + adenosine 3',5'-bisphosphate + H(+). Its function is as follows. Sulfotransferase that utilizes 3'-phospho-5'-adenylyl sulfate (PAPS) to catalyze the sulfate conjugation of phenolic compounds. Does not transfer sulfate to steroids, dopamine, acetaminophen, or alpha-naphthol. Except in mitochondria, where it can add sulfate to cholesterol producing cholesterol sulfate, which alters mitochondrial membrane organization, and impacts protein complex mobility increasing state-III respiration, thereby modulating mitochondrial respiration. Catalyzes the sulfation of the carcinogenic N-hydroxy-2-acetylaminofluorene leading to highly reactive intermediates capable of forming DNA adducts, potentially resulting in mutagenesis. The protein is Sulfotransferase 1C2 (SULT1C2) of Homo sapiens (Human).